Consider the following 940-residue polypeptide: Serine/threonine-protein phosphatase 1 regulatory subunit 10 (940 aa).

The tract at residues 1–348 (MGSGPIDPKE…EPAPPSEAMD (348 aa)) is interaction with TOX4. Residues 73–147 (KLLNNWLTYS…SDWMAVIRSQ (75 aa)) form the TFIIS N-terminal domain. 4 disordered regions span residues 147-211 (QSST…FRST), 247-270 (SNVA…NTTP), 304-400 (KIKK…KSVT), and 533-905 (YVET…HGGD). 2 stretches are compositionally biased toward basic and acidic residues: residues 153–166 (AEKD…EGKS) and 174–196 (PLTE…EKPK). Lys179 is covalently cross-linked (Glycyl lysine isopeptide (Lys-Gly) (interchain with G-Cter in SUMO2)). A Phosphothreonine modification is found at Thr256. Lys262 participates in a covalent cross-link: Glycyl lysine isopeptide (Lys-Gly) (interchain with G-Cter in SUMO2). Ser313 bears the Phosphoserine mark. Residues 325–336 (KTSTEPSTAKPS) are compositionally biased toward low complexity. A necessary for interaction with PPP1CA region spans residues 357–433 (PPVEVPELMD…NKIKDFGEAA (77 aa)). Position 382 is a phosphoserine (Ser382). Residues 393–408 (GRKRKSVTWPEEGKLR) form a necessary for interaction with PPP1CC region. The PP1-binding motif signature appears at 394–423 (RKRKSVTWPEEGKLREYFYFELDETERVNV). Position 398 is a phosphoserine; by PKA (Ser398). An interaction with WDR82 region spans residues 418–619 (TERVNVNKIK…IKQMLVPHGL (202 aa)). Composition is skewed to gly residues over residues 540–551 (GGSGGSPDGAGG) and 565–579 (MGAG…GGGI). Ser545 is modified (phosphoserine). Positions 583 to 595 (EILTSIMGSPNSH) are enriched in polar residues. Residue Ser591 is modified to Phosphoserine. A compositionally biased stretch (basic and acidic residues) spans 596–611 (PSEELLKQPDYSDKIK). Residues 644 to 655 (PPGPGGPMPGPH) show a composition bias toward pro residues. Arg665 carries the omega-N-methylarginine modification. Positions 676–690 (GDPFWDGPGDPMRGG) are enriched in low complexity. Arg693 bears the Omega-N-methylarginine mark. Residues 714 to 723 (EPPPPPPPPF) show a composition bias toward pro residues. Composition is skewed to gly residues over residues 726–764 (ARGG…GMGN) and 790–845 (SSMG…GSGG). Arg739 is subject to Omega-N-methylarginine. Basic and acidic residues-rich tracts occupy residues 862 to 886 (PHDV…HDGP) and 894 to 903 (RGHDGGHSHG). Residues 906-934 (MSNRPVCRHFMMKGNCRYENNCAFYHPGV) form a C3H1-type zinc finger.

As to quaternary structure, component of the PNUTS-PP1 complex (also named PTW/PP1 complex), composed of PPP1R10/PNUTS, TOX4, WDR82, and PPP1CA (or PPP1CB or PPP1CC). Phosphorylated on Ser-398 by PKA within the region necessary for interaction with PPP1CA.

It localises to the nucleus. Its subcellular location is the chromosome. Functionally, substrate-recognition component of the PNUTS-PP1 protein phosphatase complex, a protein phosphatase 1 (PP1) complex that promotes RNA polymerase II transcription pause-release, allowing transcription elongation. Promoter-proximal pausing by RNA polymerase II is a transcription halt following transcription initiation but prior to elongation, which acts as a checkpoint to control that transcripts are favorably configured for transcriptional elongation. The PNUTS-PP1 complex mediates the release of RNA polymerase II from promoter-proximal region of genes by catalyzing dephosphorylation of proteins involved in transcription, such as AFF4, CDK9, MEPCE, INTS12, NCBP1, POLR2M/GDOWN1 and SUPT6H. The PNUTS-PP1 complex also regulates RNA polymerase II transcription termination by mediating dephosphorylation of SUPT5H in termination zones downstream of poly(A) sites, thereby promoting deceleration of RNA polymerase II transcription. PNUTS-PP1 complex is also involved in the response to replication stress by mediating dephosphorylation of POLR2A at 'Ser-5' of the CTD, promoting RNA polymerase II degradation. The PNUTS-PP1 complex also plays a role in the control of chromatin structure and cell cycle progression during the transition from mitosis into interphase. PNUTS-PP1 complex mediates dephosphorylation of MYC, promoting MYC stability by preventing MYC ubiquitination by the SCF(FBXW7) complex. In addition to acts as a substrate-recognition component, PPP1R10/PNUTS also acts as a nuclear targeting subunit for the PNUTS-PP1 complex. In some context, PPP1R10/PNUTS also acts as an inhibitor of protein phosphatase 1 (PP1) activity by preventing access to substrates, such as RB. This Macaca mulatta (Rhesus macaque) protein is Serine/threonine-protein phosphatase 1 regulatory subunit 10 (PPP1R10).